Consider the following 338-residue polypeptide: Arginase, mitochondrial (338 aa).

Residues 1 to 15 (MSTIARRGFHYMQRL) constitute a mitochondrion transit peptide. Residues Ser73 and 92 to 95 (DSTN) each bind L-ornithine. His157, Asp181, His183, and Asp185 together coordinate Mn(2+). Position 185-187 (185-187 (DLY)) interacts with L-ornithine. Substrate is bound at residue 191–193 (EGN). Ser220 contacts L-ornithine. Residues Asp266 and Asp268 each coordinate Mn(2+). A substrate-binding site is contributed by Glu309.

Belongs to the arginase family. In terms of assembly, forms homohexamers. It depends on Mn(2+) as a cofactor.

The protein localises to the mitochondrion. The enzyme catalyses L-arginine + H2O = urea + L-ornithine. The catalysed reaction is agmatine + H2O = urea + putrescine. It participates in nitrogen metabolism; urea cycle; L-ornithine and urea from L-arginine: step 1/1. It functions in the pathway amine and polyamine biosynthesis; putrescine biosynthesis via agmatine pathway; putrescine from agmatine: step 1/1. In terms of biological role, catalyzes the hydrolysis of L-arginine to urea and L-ornithine. The latter can be utilized in the urea cycle or as a precursor for the synthesis of both polyamines and proline. Possesses agmatinase activity. Catalyzes the formation of putrescine from agmatine. The chain is Arginase, mitochondrial from Medicago truncatula (Barrel medic).